The primary structure comprises 380 residues: tRNA-specific 2-thiouridylase MnmA (380 aa).

Residues 6–13 (ALSGGVDS) and M32 each bind ATP. C101 (nucleophile) is an active-site residue. An intrachain disulfide couples C101 to C199. G125 provides a ligand contact to ATP. The tract at residues 148–150 (KDQ) is interaction with tRNA. C199 functions as the Cysteine persulfide intermediate in the catalytic mechanism.

Belongs to the MnmA/TRMU family.

Its subcellular location is the cytoplasm. It catalyses the reaction S-sulfanyl-L-cysteinyl-[protein] + uridine(34) in tRNA + AH2 + ATP = 2-thiouridine(34) in tRNA + L-cysteinyl-[protein] + A + AMP + diphosphate + H(+). Catalyzes the 2-thiolation of uridine at the wobble position (U34) of tRNA, leading to the formation of s(2)U34. The sequence is that of tRNA-specific 2-thiouridylase MnmA from Beutenbergia cavernae (strain ATCC BAA-8 / DSM 12333 / CCUG 43141 / JCM 11478 / NBRC 16432 / NCIMB 13614 / HKI 0122).